The primary structure comprises 132 residues: UPF0299 membrane protein YohJ (132 aa).

Helical transmembrane passes span 8 to 28, 31 to 51, 63 to 83, and 93 to 113; these read IWQY…GIFI, LLPV…VLLA, GCYL…VGVM, and FGPV…VVSW.

It belongs to the UPF0299 family.

It is found in the cell inner membrane. The protein is UPF0299 membrane protein YohJ of Escherichia fergusonii (strain ATCC 35469 / DSM 13698 / CCUG 18766 / IAM 14443 / JCM 21226 / LMG 7866 / NBRC 102419 / NCTC 12128 / CDC 0568-73).